The following is a 307-amino-acid chain: Agmatinase (307 aa).

Residues histidine 128, aspartate 151, histidine 153, aspartate 155, aspartate 232, and aspartate 234 each coordinate Mn(2+).

This sequence belongs to the arginase family. Agmatinase subfamily. Requires Mn(2+) as cofactor.

It catalyses the reaction agmatine + H2O = urea + putrescine. It participates in amine and polyamine biosynthesis; putrescine biosynthesis via agmatine pathway; putrescine from agmatine: step 1/1. Its function is as follows. Catalyzes the formation of putrescine from agmatine. The protein is Agmatinase of Neisseria gonorrhoeae (strain ATCC 700825 / FA 1090).